We begin with the raw amino-acid sequence, 353 residues long: 3'-5' exonuclease (353 aa).

The interval 1–119 is disordered; that stretch reads MEKYLTKMPI…PSPEKEKPEK (119 aa). 2 stretches are compositionally biased toward basic and acidic residues: residues 13 to 30 and 37 to 50; these read KANE…ETPK and KKDT…KENA. Residues 59–70 show a composition bias toward basic residues; sequence TKGRPGRPAAKR. Positions 71 to 90 are enriched in basic and acidic residues; the sequence is KNLDTPDVTEKLAMEEENPP. Phosphoserine occurs at positions 103, 109, and 111. The 169-residue stretch at 145–313 folds into the 3'-5' exonuclease domain; that stretch reads VLQWVEKQKD…GQVIYRELER (169 aa). Mg(2+) is bound by residues Asp162, Glu164, and Asp300.

The protein belongs to the WRNexo family.

The protein localises to the nucleus. Has exonuclease activity on both single-stranded and duplex templates bearing overhangs, but not blunt ended duplex DNA, and cleaves in a 3'-5' direction. Essential for the formation of DNA replication focal centers. Has an important role in maintaining genome stability. The polypeptide is 3'-5' exonuclease (Drosophila melanogaster (Fruit fly)).